Consider the following 603-residue polypeptide: NADH-ubiquinone oxidoreductase chain 5 (603 aa).

Helical transmembrane passes span 4 to 24 (YTTM…TTLI), 38 to 58 (SIIA…MCLD), 87 to 107 (MTFI…SLWY), 122 to 142 (LIFL…QLFI), 144 to 160 (WEGV…WWYA), 171 to 191 (AILY…WFLL), 211 to 233 (TPLL…HPWL), 241 to 261 (TPVS…FLLI), 272 to 292 (LIQT…AICA), 301 to 320 (IVAF…IGIN), 325 to 347 (AFLH…GSII), 370 to 390 (STSL…TGFY), 407 to 429 (WALS…MILL), 457 to 477 (LTIG…PMST), 482 to 502 (IPLY…LTAL), and 583 to 603 (MIKL…LLIM).

This sequence belongs to the complex I subunit 5 family. In terms of assembly, core subunit of respiratory chain NADH dehydrogenase (Complex I) which is composed of 45 different subunits.

Its subcellular location is the mitochondrion inner membrane. It catalyses the reaction a ubiquinone + NADH + 5 H(+)(in) = a ubiquinol + NAD(+) + 4 H(+)(out). Functionally, core subunit of the mitochondrial membrane respiratory chain NADH dehydrogenase (Complex I) which catalyzes electron transfer from NADH through the respiratory chain, using ubiquinone as an electron acceptor. Essential for the catalytic activity and assembly of complex I. The polypeptide is NADH-ubiquinone oxidoreductase chain 5 (MT-ND5) (Pan paniscus (Pygmy chimpanzee)).